A 130-amino-acid polypeptide reads, in one-letter code: Small ribosomal subunit protein uS9 (130 aa).

It belongs to the universal ribosomal protein uS9 family.

The polypeptide is Small ribosomal subunit protein uS9 (Saccharophagus degradans (strain 2-40 / ATCC 43961 / DSM 17024)).